Consider the following 1390-residue polypeptide: ABC transporter G family member 43 (1390 aa).

The disordered stretch occupies residues 1–22 (MTMPQTDGVEFASRNNLENGDG). In terms of domain architecture, ABC transporter 1 spans 137–411 (SKLSRFTFSK…FEDCGFKCPQ (275 aa)). 171-178 (GPPGCGKT) is a binding site for ATP. Residues 489 to 701 (DMFKACSRRE…AEIGLTSNEF (213 aa)) form the ABC transmembrane type-2 1 domain. The next 6 membrane-spanning stretches (helical) occupy residues 507–527 (FVYV…MTVY), 541–561 (YLLG…LPEL), 594–614 (IPIS…VIGY), 626–646 (LILF…GAVF), 651–671 (VATT…GFIV), and 737–757 (FGAL…ALTF). An ABC transporter 2 domain is found at 798–1043 (FTFQDVQYFI…VIEYFMSIPG (246 aa)). 835–842 (GVSGAGKT) lines the ATP pocket. One can recognise an ABC transmembrane type-2 2 domain in the interval 1115-1329 (EQFKACLWKQ…VLNGLLTSQY (215 aa)). 7 helical membrane-spanning segments follow: residues 1134–1154 (YNLT…ILFL), 1173–1193 (MFTV…FCVA), 1218–1238 (VLVE…IVYP), 1253–1273 (FYSI…LVVV), 1279–1299 (IAFT…GYVM), 1307–1327 (WWIW…LLTS), and 1362–1382 (LVAV…AFFI).

Belongs to the ABC transporter superfamily. ABCG family. PDR (TC 3.A.1.205) subfamily.

Its subcellular location is the membrane. Functionally, may be a general defense protein. The chain is ABC transporter G family member 43 (ABCG43) from Arabidopsis thaliana (Mouse-ear cress).